A 426-amino-acid chain; its full sequence is Putative zinc protease AlbF (426 aa).

A Zn(2+)-binding site is contributed by His-66. Residue Glu-69 is the Proton acceptor of the active site. Positions 70 and 142 each coordinate Zn(2+).

This sequence belongs to the peptidase M16 family. Zn(2+) serves as cofactor.

Its function is as follows. Required for production of the bacteriocin subtilosin. Could catalyze some step in the processing of presubtilosin. In Bacillus subtilis (strain 168), this protein is Putative zinc protease AlbF (albF).